The primary structure comprises 359 residues: Peptide chain release factor 1 (359 aa).

Gln235 is subject to N5-methylglutamine. The tract at residues 284–311 is disordered; it reads KAESERSASRKNQVGSGDRSERIRTYNF.

The protein belongs to the prokaryotic/mitochondrial release factor family. Methylated by PrmC. Methylation increases the termination efficiency of RF1.

Its subcellular location is the cytoplasm. In terms of biological role, peptide chain release factor 1 directs the termination of translation in response to the peptide chain termination codons UAG and UAA. The protein is Peptide chain release factor 1 of Bartonella quintana (strain Toulouse) (Rochalimaea quintana).